The chain runs to 1078 residues: Exportin-1 (1078 aa).

Residues 34–100 enclose the Importin N-terminal domain; the sequence is AQQVLTQFQA…RNYIVAVMIK (67 aa).

This sequence belongs to the exportin family. In terms of assembly, interacts with php4.

The protein localises to the nucleus. Receptor for the leucine-rich nuclear export signal (NES). In Schizosaccharomyces pombe (strain 972 / ATCC 24843) (Fission yeast), this protein is Exportin-1 (xpo1).